Here is a 143-residue protein sequence, read N- to C-terminus: Agaricus bisporus lectin (143 aa).

The beta-D-Gal-(1-&gt;3)-alpha-D-GalNAc site is built by Ala29, Ser48, Gly49, and Asn73. 3 residues coordinate N-acetyl-beta-D-glucosamine: Thr82, Arg103, and Tyr114.

The protein belongs to the fungal fruit body lectin family. Homotetramer.

Its function is as follows. Lectin that recognizes O-linked galactose-beta-1,3-N-acetylgalactosamine, a disaccharide (Thomsen-Friedenreich antigen or T-disaccharide), present on cell surface glycoproteins. Can also bind galactose-beta-1,3-N-acetylglucosamine. Does not bind monosaccharides. Can be internalized by clathrin-coated vesicles after binding to surface glycoproteins. After internalization it inhibits nuclear import of nuclear localization signal dependent proteins. Inhibits proliferation of malignant cells without cytotoxicity for normal cells. In Agaricus bisporus (White button mushroom), this protein is Agaricus bisporus lectin.